A 366-amino-acid chain; its full sequence is Sulfite reductase, dissimilatory-type subunit beta (366 aa).

Residues C140, C177, C178, C182, C220, C241, C244, and C247 each coordinate [4Fe-4S] cluster. C182 serves as a coordination point for siroheme. A 4Fe-4S ferredoxin-type domain is found at 232 to 262 (KTIKVDVEKCMYCGNCYTMCPGMPLFDPEND).

In terms of assembly, heterotetramer of two alpha and two beta subunits. [4Fe-4S] cluster serves as cofactor. The cofactor is siroheme.

The protein resides in the membrane. It catalyses the reaction [DsrC protein]-trisulfide + NAD(+) + 3 H2O = [DsrC protein]-dithiol + sulfite + NADH + 3 H(+). Its function is as follows. Catalyzes the reduction of sulfite to sulfide. This is the terminal oxidation reaction in sulfate respiration. The polypeptide is Sulfite reductase, dissimilatory-type subunit beta (dsrB) (Archaeoglobus fulgidus (strain ATCC 49558 / DSM 4304 / JCM 9628 / NBRC 100126 / VC-16)).